The sequence spans 2541 residues: Talin-1 (2541 aa).

Residues 86 to 403 form the FERM domain; it reads RPLKIRMLDG…GYIDIILKKK (318 aa). Threonine 167 bears the Phosphothreonine mark. An interaction with LAYN region spans residues 280 to 435; it reads FQAHKNCGQM…PKKSTVLQQQ (156 aa). 5 positions are modified to phosphoserine: serine 405, serine 425, serine 446, serine 620, and serine 729. Positions 482-655 are helical bundle R1; it reads RGHMPPLTSA…QASGELLQQI (174 aa). The helical bundle R2 stretch occupies residues 656–786; it reads GESDTDPHFQ…ALNELLQHVK (131 aa). Positions 787-911 are helical bundle R3; that stretch reads AHATGAGPAG…NAAAQNAIKK (125 aa). Positions 913–1044 are helical bundle R4; that stretch reads LVQRLEHAAK…RTAAQKAQEA (132 aa). Serine 1021 is modified (phosphoserine). The interval 1046–1206 is helical bundle R5; that stretch reads GPLEMDSALS…NRCVSCLPGQ (161 aa). Tyrosine 1116 carries the post-translational modification Phosphotyrosine. Phosphothreonine is present on threonine 1142. A phosphoserine mark is found at serine 1201 and serine 1225. The helical bundle R6 stretch occupies residues 1207 to 1357; sequence RDVDNALRAV…QLITMCTQQA (151 aa). Threonine 1263 is subject to Phosphothreonine. Serine 1323 and serine 1328 each carry phosphoserine. Residues 1327 to 1948 form an interaction with SYNM region; it reads ASPNLKSQLA…CSPSDVYTKK (622 aa). Positions 1358–1453 are helical bundle R7A; Interaction with KANK1; the sequence is PGQKECDNAL…AYLVGVSDPN (96 aa). The tract at residues 1359–1659 is interaction with VCL and F-actin; it reads GQKECDNALR…SMRDKAPGQL (301 aa). The segment at 1461-1580 is helical bundle R8; that stretch reads LVEPTQFARA…NLSAFASNPE (120 aa). N6-acetyllysine is present on lysine 1544. Residues 1581–1653 are helical bundle R7B; Interaction with KANK1; sequence FSSVPAQISP…IKKLITSMRD (73 aa). The interval 1655–1822 is helical bundle R9; that stretch reads APGQLECETA…TLNEAASAAG (168 aa). Positions 1823-1973 are helical bundle R10; sequence VVGGMVDSIT…VLAALQAGNR (151 aa). Serine 1849 is subject to Phosphoserine. Residue threonine 1855 is modified to Phosphothreonine. The residue at position 1878 (serine 1878) is a Phosphoserine. Residues 1974 to 2140 form a helical bundle R11 region; sequence GTQACITAAS…TVKAVEDEAT (167 aa). Residue lysine 2031 is modified to N6-acetyllysine. Phosphoserine is present on serine 2040. Lysine 2115 bears the N6-acetyllysine mark. Positions 2141-2294 are helical bundle R12; sequence KGTRALEATT…QAAEAMKGTE (154 aa). An I/LWEQ domain is found at 2293 to 2533; the sequence is TEWVDPEDPT…QIRQQQYKFL (241 aa). The interval 2300–2482 is helical bundle R13; it reads DPTVIAENEL…AAQKAAAFED (183 aa).

As to quaternary structure, part of a complex composed of THSD1, PTK2/FAK1, TLN1 and VCL. Interacts with THSD1; this promotes interaction with PTK2/FAK1 and VCL. Interacts with NRAP and LAYN. Interacts with SYNM. Interacts with ITGB1; the interaction is prevented by competitive binding of ITGB1BP1. Binds with high affinity to VCL and with low affinity to integrins. Interacts with APBB1IP; this inhibits VCL binding. Interacts with PTK2/FAK1. Interacts with PIP5K1C. Interacts with F-actin. Interacts with SVEP1. Interacts (via R7 domain) with KANK1 or KANK2 (via KN motif); this interaction likely initiates the assembly of cortical microtubule stabilization complexes (CMSCs) at the vicinity of focal adhesions.

The protein localises to the cell projection. Its subcellular location is the ruffle membrane. The protein resides in the cytoplasm. It is found in the cytoskeleton. It localises to the cell surface. The protein localises to the cell junction. Its subcellular location is the focal adhesion. In terms of biological role, high molecular weight cytoskeletal protein concentrated at regions of cell-matrix and cell-cell contacts. Involved in connections of major cytoskeletal structures to the plasma membrane. With KANK1 co-organize the assembly of cortical microtubule stabilizing complexes (CMSCs) positioned to control microtubule-actin crosstalk at focal adhesions (FAs) rims. The sequence is that of Talin-1 (Tln1) from Mus musculus (Mouse).